We begin with the raw amino-acid sequence, 180 residues long: Hypoxanthine-guanine phosphoribosyltransferase (180 aa).

The diphosphate site is built by K43 and G44. Residues E99 and D100 each contribute to the Mg(2+) site. The active-site Proton acceptor is the D103. GMP is bound by residues K131, F152–I153, and D159. R165 contacts diphosphate.

It belongs to the purine/pyrimidine phosphoribosyltransferase family. The cofactor is Mg(2+).

The protein localises to the cytoplasm. The enzyme catalyses IMP + diphosphate = hypoxanthine + 5-phospho-alpha-D-ribose 1-diphosphate. It carries out the reaction GMP + diphosphate = guanine + 5-phospho-alpha-D-ribose 1-diphosphate. It functions in the pathway purine metabolism; IMP biosynthesis via salvage pathway; IMP from hypoxanthine: step 1/1. Its pathway is purine metabolism; GMP biosynthesis via salvage pathway; GMP from guanine: step 1/1. Functionally, purine salvage pathway enzyme that catalyzes the transfer of the ribosyl-5-phosphate group from 5-phospho-alpha-D-ribose 1-diphosphate (PRPP) to the N9 position of the 6-oxopurines hypoxanthine and guanine to form the corresponding ribonucleotides IMP (inosine 5'-monophosphate) and GMP (guanosine 5'-monophosphate), with the release of PPi. The sequence is that of Hypoxanthine-guanine phosphoribosyltransferase (hpt) from Streptococcus thermophilus (strain CNRZ 1066).